Here is a 72-residue protein sequence, read N- to C-terminus: Putative membrane protein insertion efficiency factor (72 aa).

The protein belongs to the UPF0161 family.

It is found in the cell inner membrane. In terms of biological role, could be involved in insertion of integral membrane proteins into the membrane. This chain is Putative membrane protein insertion efficiency factor, found in Myxococcus xanthus (strain DK1622).